The chain runs to 249 residues: MKKTGYFLLAVIVIVAAAGVGYWKFSGNPDALREIVLEQCLPDQLQHQNPAPCAEVKPRAGYVVFKDRHGPLQYLLMPTYRINGTESPLLLEPATPNFFWLAWQARDYMSKKYGHDIPDSAVSLTVNSRLGRSQDHLHIHISCIRPDVREQLDNDLTRISTRWLPLPGGLMGHEYLARRVTESELAQRSPFMMLAEEVPEARDHMGRYGLAVVRQSDGSFVLLATQRNLLTLNRASAEEIQDHQCDILK.

The chain crosses the membrane as a helical span at residues 5–25; it reads GYFLLAVIVIVAAAGVGYWKF.

The protein belongs to the Cdh family.

The protein resides in the cell inner membrane. It catalyses the reaction a CDP-1,2-diacyl-sn-glycerol + H2O = a 1,2-diacyl-sn-glycero-3-phosphate + CMP + 2 H(+). The protein operates within phospholipid metabolism; CDP-diacylglycerol degradation; phosphatidate from CDP-diacylglycerol: step 1/1. The polypeptide is CDP-diacylglycerol pyrophosphatase (Salmonella arizonae (strain ATCC BAA-731 / CDC346-86 / RSK2980)).